Consider the following 129-residue polypeptide: Protein GLUTAMINE DUMPER 2 (129 aa).

The Extracellular segment spans residues 1 to 34 (MQTMEGRQYNYQDSINASSSMVVPHSPWHSPVPY). Residues 35 to 55 (LFGGLAAMLALICVALLILAC) form a helical membrane-spanning segment. Topologically, residues 56–129 (SYWRLSGSAE…DHNEEEGRRG (74 aa)) are cytoplasmic. Residues 66 to 89 (RDLEAGDDAKPDNDTNKTKHTEMP) form a disordered region. Positions 94-98 (VIMAG) match the VIMAG motif. The segment at 106 to 129 (ATPATRSEQSCTCGDHNEEEGRRG) is disordered. The span at 120–129 (DHNEEEGRRG) shows a compositional bias: basic and acidic residues.

This sequence belongs to the GLUTAMINE DUMPER 1 (TC 9.B.60) family. Expressed in the vascular tissues.

Its subcellular location is the membrane. In terms of biological role, probable subunit of an amino acid transporter involved in the regulation of the amino acid metabolism. Stimulates amino acid export by activating nonselective amino acid facilitators. This Arabidopsis thaliana (Mouse-ear cress) protein is Protein GLUTAMINE DUMPER 2 (GDU2).